The primary structure comprises 131 residues: Ribosome-binding factor A (131 aa).

The interval 110 to 131 (QMNLGEDNEDNEDKENNDPGEE) is disordered. A compositionally biased stretch (acidic residues) spans 115 to 131 (EDNEDNEDKENNDPGEE).

It belongs to the RbfA family. As to quaternary structure, monomer. Binds 30S ribosomal subunits, but not 50S ribosomal subunits or 70S ribosomes.

The protein localises to the cytoplasm. Its function is as follows. One of several proteins that assist in the late maturation steps of the functional core of the 30S ribosomal subunit. Associates with free 30S ribosomal subunits (but not with 30S subunits that are part of 70S ribosomes or polysomes). Required for efficient processing of 16S rRNA. May interact with the 5'-terminal helix region of 16S rRNA. The sequence is that of Ribosome-binding factor A from Natranaerobius thermophilus (strain ATCC BAA-1301 / DSM 18059 / JW/NM-WN-LF).